Reading from the N-terminus, the 551-residue chain is Adenylyl cyclase-associated protein (551 aa).

The interval 34 to 55 (SGHKPLPNMHRPSRDSNSQTHN) is disordered. Position 92 is a phosphoserine (serine 92). At threonine 96 the chain carries Phosphothreonine. Residues 288-300 (SASKTQAPSSGDS) show a composition bias toward polar residues. 2 disordered regions span residues 288–333 (SASK…NKGD) and 348–395 (TSGL…PVKP). The span at 305 to 315 (LPPPPPPPPPS) shows a compositional bias: pro residues. Basic and acidic residues predominate over residues 352 to 361 (RKVDKSEMTH). Positions 395–529 (PPRIELENTK…EEGDYAERAV (135 aa)) constitute a C-CAP/cofactor C-like domain.

This sequence belongs to the CAP family.

The N-terminal domain binds to adenylyl cyclase, thereby enabling adenylyl cyclase to be activated by upstream regulatory signals, such as Ras. The C-terminal domain is required for normal cellular morphology and growth control. This Schizosaccharomyces pombe (strain 972 / ATCC 24843) (Fission yeast) protein is Adenylyl cyclase-associated protein (cap1).